Here is a 567-residue protein sequence, read N- to C-terminus: MTDFKEFADVCKQIEHISSSLEMTDVVSDMLKSISTEELPVVTHFVMGDVFPAWSVEQLGVGTSLLYSALSESSGLSLKEIEDLVRSTGDIGETAVAALGKKKKNKKKNQASLSFFSEDAASVSISIMDVFERFLDISRYSGAGSQSSKMRNLQFLFNSSSSEEARYLARLTIEDLRIGVGEGIVRDAISKAFDVPAGDIERGFMLTNDLGLVAVAAKEGGIEEISKLRMELDRPIKMMLAQVTPSIEAAIKDLGMLAVEWKFDGARVQIHKKGDSINIFSRRLENVTLSLPDIVEAVKLHVKADSAILEGEAVAVDENGAPRAFQDILKRFRRKYDVETMVREIPLTLNLFDILYLNGDVLMDQSLLRRREQLVACVENCDSIKVDEQVLTDDVNVVNDIYAAALNGGHEGVMLKNPEASYSPGKRGKNWLKKKPIMETLDLVVIAAEWGYGKRANLIGSYALACFDPEDGKFLPIGKVATGFSDEQLAELTEVFSELIIGESGREIELKPDVVFEIAFEEIQKSTNYGSGYALRFPRLVNVREDKSPEEAETIDRIESIYLSQRG.

Glu260 serves as a coordination point for ATP. Lys262 acts as the N6-AMP-lysine intermediate in catalysis. Arg267, Arg282, Glu312, Phe352, Arg427, and Lys433 together coordinate ATP.

Belongs to the ATP-dependent DNA ligase family. Requires Mg(2+) as cofactor.

The catalysed reaction is ATP + (deoxyribonucleotide)n-3'-hydroxyl + 5'-phospho-(deoxyribonucleotide)m = (deoxyribonucleotide)n+m + AMP + diphosphate.. In terms of biological role, DNA ligase that seals nicks in double-stranded DNA during DNA replication, DNA recombination and DNA repair. The chain is DNA ligase from Methanococcoides burtonii (strain DSM 6242 / NBRC 107633 / OCM 468 / ACE-M).